An 807-amino-acid polypeptide reads, in one-letter code: Anaphase-promoting complex subunit 4 (807 aa).

Phosphotyrosine is present on tyrosine 469. The tract at residues 755 to 788 is disordered; that stretch reads DESSDDEEEAGGKPVKIKEEVLSESETEAHQDAA. A phosphoserine mark is found at serine 757 and serine 758. Residues 770-785 are compositionally biased toward basic and acidic residues; that stretch reads KIKEEVLSESETEAHQ. Residue lysine 772 forms a Glycyl lysine isopeptide (Lys-Gly) (interchain with G-Cter in SUMO2) linkage. Phosphoserine is present on residues serine 777 and serine 779. A Glycyl lysine isopeptide (Lys-Gly) (interchain with G-Cter in SUMO2) cross-link involves residue lysine 797.

Belongs to the APC4 family. As to quaternary structure, the mammalian APC/C is composed at least of 14 distinct subunits ANAPC1, ANAPC2, CDC27/APC3, ANAPC4, ANAPC5, CDC16/APC6, ANAPC7, CDC23/APC8, ANAPC10, ANAPC11, CDC26/APC12, ANAPC13, ANAPC15 and ANAPC16 that assemble into a complex of at least 19 chains with a combined molecular mass of around 1.2 MDa; APC/C interacts with FZR1 and FBXO5. In the context of the APC/C complex, directly interacts with UBE2S. Interacts with FBXO43.

It localises to the nucleus. It participates in protein modification; protein ubiquitination. Component of the anaphase promoting complex/cyclosome (APC/C), a cell cycle-regulated E3 ubiquitin ligase that controls progression through mitosis and the G1 phase of the cell cycle. The APC/C complex acts by mediating ubiquitination and subsequent degradation of target proteins: it mainly mediates the formation of 'Lys-11'-linked polyubiquitin chains and, to a lower extent, the formation of 'Lys-48'- and 'Lys-63'-linked polyubiquitin chains. The APC/C complex catalyzes assembly of branched 'Lys-11'-/'Lys-48'-linked branched ubiquitin chains on target proteins. The polypeptide is Anaphase-promoting complex subunit 4 (Anapc4) (Mus musculus (Mouse)).